Here is a 295-residue protein sequence, read N- to C-terminus: Ventral anterior homeobox 1a (295 aa).

Basic and acidic residues predominate over residues 20-33; the sequence is ISKPKDNKEIRETQ. Residues 20 to 63 form a disordered region; the sequence is ISKPKDNKEIRETQAKMPSTYLKEQPGTYPAPGSSELCAKNKSS. The segment at residues 97 to 156 is a DNA-binding region (homeobox); the sequence is PKRSRTSFTAEQLYRLEMEFQRCQYVVGRERTDLSRQLNLSETQVKVWFQNRRTKQKKDQ. Positions 203 to 226 are disordered; the sequence is RAPNSSGPGTRSLATVTSTPPHQP. The segment covering 204–222 has biased composition (polar residues); that stretch reads APNSSGPGTRSLATVTSTP.

It belongs to the EMX homeobox family.

The protein localises to the nucleus. Its function is as follows. May play a role in the specification and maintenance of basal forebrain identity. The sequence is that of Ventral anterior homeobox 1a (vax1-a) from Xenopus laevis (African clawed frog).